Reading from the N-terminus, the 96-residue chain is Muconolactone Delta-isomerase (96 aa).

This sequence belongs to the muconolactone Delta-isomerase family. In terms of assembly, homodecamer.

The enzyme catalyses (S)-muconolactone = (4,5-dihydro-5-oxofuran-2-yl)-acetate. It functions in the pathway aromatic compound metabolism; beta-ketoadipate pathway; 5-oxo-4,5-dihydro-2-furylacetate from catechol: step 3/3. The polypeptide is Muconolactone Delta-isomerase (catC) (Pseudomonas putida (Arthrobacter siderocapsulatus)).